The primary structure comprises 552 residues: Solute carrier family 22 member 6-B (552 aa).

The Cytoplasmic portion of the chain corresponds to 1 to 16 (MAFQEILESLGGMGRY). The chain crosses the membrane as a helical span at residues 17-37 (QVIHVVLLSLPVFMLASHNLM). The Extracellular segment spans residues 38–137 (QNFTAATPSH…LVCNHRRMRQ (100 aa)). Residues 138-158 (VAQSIYMAGVLVGSILFGGLS) traverse the membrane as a helical segment. Over 159-164 (DKFGRR) the chain is Cytoplasmic. A helical transmembrane segment spans residues 165 to 184 (PLNIWSNLQMFVTGICAAFS). Position 185 (Pro-185) is a topological domain, extracellular. Residues 186 to 206 (NYIWYCIFRFLTGVAFSGIVL) form a helical membrane-spanning segment. The Cytoplasmic segment spans residues 207–225 (NSYSLTVEWIPTGNRAFTS). Residues 226 to 246 (TATGYCYTMGQLVLVGLAFII) traverse the membrane as a helical segment. Residues 247–250 (RDWQ) are Extracellular-facing. The helical transmembrane segment at 251–271 (WLQLAASIPFFFYFLYSWWIP) threads the bilayer. Residues 272–336 (ESGRWLVLSG…YSALDLVRTP (65 aa)) are Cytoplasmic-facing. A helical transmembrane segment spans residues 337–356 (VVRRISFCISCTWFSTSFAY). Tyr-357 is a topological domain (extracellular). Residues 358-378 (GLALDLQSFGVSIYIIQIIFG) traverse the membrane as a helical segment. At 379-398 (TVDIPAKFISYFITTYVGRR) the chain is on the cytoplasmic side. Residues 399–419 (VSQAITLILAGIAILVNISVP) traverse the membrane as a helical segment. At 420–426 (QDFQTVR) the chain is on the extracellular side. A helical transmembrane segment spans residues 427–447 (TAMAVFGKGCLAASFNCLYLY). The Cytoplasmic segment spans residues 448 to 459 (TGELYPTVIRQT). A helical membrane pass occupies residues 460 to 480 (GMGLGAMMARLGGIIAPLAQM). Over 481-487 (TGDIYHS) the chain is Extracellular. Residues 488–508 (LPLIIFGCLPILSGIAGCFLP) form a helical membrane-spanning segment. At 509–552 (ETLGVPLPETIEEVESPDKQQKDVNVSAKIPLKETELYNMKTDV) the chain is on the cytoplasmic side.

This sequence belongs to the major facilitator (TC 2.A.1) superfamily. Organic cation transporter (TC 2.A.1.19) family. Glycosylated. Glycosylation is necessary for proper targeting of the transporter to the plasma membrane.

The protein localises to the cell membrane. It localises to the basolateral cell membrane. Its subcellular location is the basal cell membrane. In terms of biological role, involved in the renal elimination of endogenous and exogenous organic anions. Mediates the sodium-independent uptake of p-aminohippurate (PAH), cidofovir, adefovir, 9-(2-phosphonylmethoxyethyl) guanine (PMEG), 9-(2-phosphonylmethoxyethyl) diaminopurine (PMEDAP) and edaravone sulfate. PAH uptake is inhibited by furosemide, steviol, phorbol 12-myristate 13-acetate (PMA), calcium ionophore A23187, benzylpenicillin, furosemide, indomethacin, bumetamide, losartan, probenecid, phenol red, urate, and alpha-ketoglutarate. In Xenopus laevis (African clawed frog), this protein is Solute carrier family 22 member 6-B (slc22a6-b).